Consider the following 247-residue polypeptide: Probable transcriptional regulatory protein PMT_1423 (247 aa).

This sequence belongs to the TACO1 family.

The protein resides in the cytoplasm. This chain is Probable transcriptional regulatory protein PMT_1423, found in Prochlorococcus marinus (strain MIT 9313).